The primary structure comprises 254 residues: Putative epimerase LsrE (254 aa).

The helical transmembrane segment at 14 to 34 threads the bilayer; sequence VALLASYPLSVGILAGQWIAL. Residues His-50, Asp-52, and His-81 each coordinate a divalent metal cation. Asp-52 (proton acceptor) is an active-site residue. Residues His-81, 166 to 169, 199 to 201, and 221 to 222 each bind substrate; these read GYGS, DGS, and GS. Residue Asp-199 participates in a divalent metal cation binding. Catalysis depends on Asp-199, which acts as the Proton donor.

Belongs to the ribulose-phosphate 3-epimerase family. It depends on a divalent metal cation as a cofactor.

The protein localises to the cell membrane. The polypeptide is Putative epimerase LsrE (lsrE) (Salmonella paratyphi A (strain ATCC 9150 / SARB42)).